We begin with the raw amino-acid sequence, 553 residues long: Protein PNS1 (553 aa).

Residues Met1–Gln53 form a disordered region. At Met1–Trp94 the chain is on the cytoplasmic side. A compositionally biased stretch (polar residues) spans Pro25–Gly34. Residues Pro95–Leu115 traverse the membrane as a helical segment. Residues Arg116–Ser142 lie on the Extracellular side of the membrane. Asn121 carries N-linked (GlcNAc...) asparagine glycosylation. The chain crosses the membrane as a helical span at residues Ala143 to Leu163. Residues Ala164–Lys169 are Cytoplasmic-facing. The helical transmembrane segment at Phe170–Tyr190 threads the bilayer. The Extracellular portion of the chain corresponds to Leu191–Ser192. The chain crosses the membrane as a helical span at residues Leu193 to Tyr213. Over Trp214–Trp241 the chain is Cytoplasmic. Residues Phe242–Ile262 form a helical membrane-spanning segment. The Extracellular portion of the chain corresponds to Val263 to Asn287. A helical membrane pass occupies residues Ala288–Ile308. Residues Arg309–Ser349 are Cytoplasmic-facing. The chain crosses the membrane as a helical span at residues Phe350–Leu370. Topologically, residues Arg371 to Asn385 are extracellular. Residues Gly386–Ala406 traverse the membrane as a helical segment. The Cytoplasmic portion of the chain corresponds to Arg407 to Asn450. Residues Val451 to Tyr471 traverse the membrane as a helical segment. Residues Leu472–Asn484 lie on the Extracellular side of the membrane. The chain crosses the membrane as a helical span at residues Phe485–Thr505. Residues Glu506–Val553 lie on the Cytoplasmic side of the membrane.

It belongs to the CTL (choline transporter-like) family.

The protein localises to the cell membrane. In terms of biological role, probably involved in transport through the plasma membrane. The protein is Protein PNS1 (PNS1) of Kluyveromyces lactis (strain ATCC 8585 / CBS 2359 / DSM 70799 / NBRC 1267 / NRRL Y-1140 / WM37) (Yeast).